Reading from the N-terminus, the 301-residue chain is tRNA pseudouridine synthase B (301 aa).

Asp-47 serves as the catalytic Nucleophile.

The protein belongs to the pseudouridine synthase TruB family. Type 1 subfamily.

It catalyses the reaction uridine(55) in tRNA = pseudouridine(55) in tRNA. Its function is as follows. Responsible for synthesis of pseudouridine from uracil-55 in the psi GC loop of transfer RNAs. This is tRNA pseudouridine synthase B from Cereibacter sphaeroides (strain ATCC 17023 / DSM 158 / JCM 6121 / CCUG 31486 / LMG 2827 / NBRC 12203 / NCIMB 8253 / ATH 2.4.1.) (Rhodobacter sphaeroides).